The chain runs to 909 residues: Glucan endo-1,3-beta-D-glucosidase ARB_01444 (909 aa).

The signal sequence occupies residues 1 to 23 (MKPYTTLPGVAVLVSLLTQSAHA). Residues 136–187 (KRSPAPQRHPPAPTKATAGYQFTNCTSTSNPGPTATSPTSGIPSQPSAPPAT) form a disordered region. Over residues 155–180 (YQFTNCTSTSNPGPTATSPTSGIPSQ) the composition is skewed to polar residues. N-linked (GlcNAc...) asparagine glycans are attached at residues Asn159, Asn239, and Asn259. Residues 191–430 (QDIFQPIAKD…KGVIQVAKNP (240 aa)) are beta-sandwich subdomain. In terms of domain architecture, GH81 spans 191–909 (QDIFQPIAKD…AGEYSTYIAL (719 aa)). The alpha/beta subdomain stretch occupies residues 431–524 (SAEEGEGIYD…GDSWTMVEGN (94 aa)). Residues 539 to 909 (SSQVTLSEGA…AGEYSTYIAL (371 aa)) form a (alpha/beta)6 barrel subdomain region. Asp654 is an active-site residue. 4 residues coordinate (1,3-beta-D-glucosyl)n: His658, Asp727, Glu729, and Glu733. Catalysis depends on residues Glu729 and Glu733. Residues 798–800 (KID) form a may provide specificity for triple-helical beta-glucan region. Residue Tyr811 participates in (1,3-beta-D-glucosyl)n binding.

This sequence belongs to the glycosyl hydrolase 81 family.

The protein resides in the secreted. The protein localises to the cell wall. It catalyses the reaction Hydrolysis of (1-&gt;3)-beta-D-glucosidic linkages in (1-&gt;3)-beta-D-glucans.. Cleaves internal linkages in 1,3-beta-glucan. Probably involved in cell separation after cytokinesis. The chain is Glucan endo-1,3-beta-D-glucosidase ARB_01444 from Arthroderma benhamiae (strain ATCC MYA-4681 / CBS 112371) (Trichophyton mentagrophytes).